Consider the following 124-residue polypeptide: Large ribosomal subunit protein uL14 (124 aa).

The protein belongs to the universal ribosomal protein uL14 family. As to quaternary structure, part of the 50S ribosomal subunit. Forms a cluster with proteins L3 and L19. In the 70S ribosome, L14 and L19 interact and together make contacts with the 16S rRNA in bridges B5 and B8.

Binds to 23S rRNA. Forms part of two intersubunit bridges in the 70S ribosome. The polypeptide is Large ribosomal subunit protein uL14 (Mycoplasmoides gallisepticum (strain R(low / passage 15 / clone 2)) (Mycoplasma gallisepticum)).